Here is a 267-residue protein sequence, read N- to C-terminus: MEMO1 family protein MM_1761 (267 aa).

The protein belongs to the MEMO1 family.

This chain is MEMO1 family protein MM_1761, found in Methanosarcina mazei (strain ATCC BAA-159 / DSM 3647 / Goe1 / Go1 / JCM 11833 / OCM 88) (Methanosarcina frisia).